A 744-amino-acid polypeptide reads, in one-letter code: Polyadenylate-binding protein, cytoplasmic and nuclear (744 aa).

Residues 1–11 (MSEVANSTSPV) show a composition bias toward polar residues. The disordered stretch occupies residues 1-42 (MSEVANSTSPVQDGADANGAQINTNVPAASGDAPTPTTAAQQ). The span at 33–42 (APTPTTAAQQ) shows a compositional bias: low complexity. RRM domains follow at residues 48–126 (ASLY…WSQR), 136–213 (GNVF…HHIP), 229–306 (TNIY…RAQK), and 332–462 (VNLY…LAQR). 4 disordered regions span residues 368 to 411 (EEKK…AGDK), 527 to 550 (GRGA…NAQQ), 607 to 651 (IAGG…PGVD), and 723 to 744 (VKNK…EEKA). A compositionally biased stretch (basic and acidic residues) spans 376 to 397 (KEVKEEKKEDEKKEDEEAKEGS). Gly residues-rich tracts occupy residues 527 to 545 (GRGA…GRGG), 609 to 632 (GGPG…GGRG), and 640 to 649 (PQGGRPGGPG). The region spanning 647–724 (GPGVDMSVLS…AMSVYDEYVK (78 aa)) is the PABC domain.

It belongs to the polyadenylate-binding protein type-1 family.

Its subcellular location is the cytoplasm. The protein resides in the nucleus. Its function is as follows. Binds the poly(A) tail of mRNA. Appears to be an important mediator of the multiple roles of the poly(A) tail in mRNA biogenesis, stability and translation. In the nucleus, involved in both mRNA cleavage and polyadenylation. Is also required for efficient mRNA export to the cytoplasm. Acts in concert with a poly(A)-specific nuclease (PAN) to affect poly(A) tail shortening, which may occur concomitantly with either nucleocytoplasmic mRNA transport or translational initiation. In the cytoplasm, stimulates translation initiation and regulates mRNA decay through translation termination-coupled poly(A) shortening, probably mediated by PAN. The sequence is that of Polyadenylate-binding protein, cytoplasmic and nuclear (PAB1) from Phaeosphaeria nodorum (strain SN15 / ATCC MYA-4574 / FGSC 10173) (Glume blotch fungus).